Here is a 107-residue protein sequence, read N- to C-terminus: Replication protein A 14 kDa subunit A (107 aa).

The residue at position 1 (Met1) is an N-acetylmethionine.

This sequence belongs to the replication factor A protein 3 family. As to quaternary structure, component of the heterotrimeric canonical replication protein A complex (RPA).

It is found in the nucleus. Functionally, as part of the replication protein A (RPA/RP-A), a single-stranded DNA-binding heterotrimeric complex, may play an essential role in DNA replication, recombination and repair. Binds and stabilizes single-stranded DNA intermediates, preventing complementary DNA reannealing and recruiting different proteins involved in DNA metabolism. In Arabidopsis thaliana (Mouse-ear cress), this protein is Replication protein A 14 kDa subunit A (RPA3A).